The primary structure comprises 153 residues: Jacalin-related lectin Calsepa (153 aa).

Alanine 2 is subject to N-acetylalanine. One can recognise a Jacalin-type lectin domain in the interval 6–152 (DTISGPWGNN…VDAIGTYNRH (147 aa)). N-glycan binding regions lie at residues 17-18 (GN), 95-96 (DN), and 140-144 (GYYVD).

It belongs to the jacalin lectin family. As to quaternary structure, homodimer. Not glycosylated. As to expression, rhizome (at protein level). Detected in the cortex and the pith of rhizome. Not detected in vascular tissues, pericycle, endodermis or rhizodermis.

It localises to the cytoplasm. Hemagglutinating activity is most inhibited by methyl alpha-mannopyranoside. This activity is inhibited to a less extent (about a third of the inhibition of that of methyl alpha-mannopyranoside) by methyl alpha-glucoside, other alpha-glucosides, such as maltose, isomaltose, panose or palatinose, and alpha-glucosides modified at the second position, such as methyl 2-deoxy-alpha-arabinoglucopyranoside or methyl 2-acetamido-2-deoxy alpha-glucopyranoside. Mildly inhibited by free monosaccharides, with glucose presenting at least 20-fold less inhibitory effect on hemagglutinating activity than mannose. Glycoproteins are somewhat inhibitory, the best being asialothyroglobulin and ovomucoid. Not inhibited by isomaltitol, sucrose or trehalose. Functionally, mannose-binding lectin. Preferentially binds mannose at concentrations ranging between 5 and 25 mM, but also binds glucose. Has a marked preference for methylated sugar derivatives, such as alpha-MeMan and alpha-MeGlc, at concentration down to 5 mM. Binds to N-glycans, but not to glycolipid-type or other type of glycans. Binds N-linked high-mannose-type glycans. Has a preference for smaller (Man(2)-Man(6)) high-mannose-type glycans to larger (Man(7)-Man(9)) ones. Recognizes both alpha1-6 extended and alpha1-3 extended monoantennary glycans. The addition of alpha1-2Man to the Man-alpha1-3Man-beta branch results in a significant loss of affinity, but beta1-2GlcNAc has some affinity. Has less affinity for biantennary glycans. However, affinity is significant for the biantennary complex-type N-glycans with bisecting GlcNAc. No affinity is observed for tri- and tetra-antennary glycans. Binds bisected glycans of the mouse brain. Selectively binds to bisecting N-glycans which are in back-fold conformation, and does not favor a glycan with an extend conformation. Has hemagglutinating activity against rabbit erythrocytes at 0.3 ug/ml and against trypsin-treated human erythrocytes at 5 ug/ml. Has mitogenic activity in murine cells. The chain is Jacalin-related lectin Calsepa from Calystegia sepium (Hedge bindweed).